Consider the following 235-residue polypeptide: Phosphoribosylaminoimidazole-succinocarboxamide synthase (235 aa).

It belongs to the SAICAR synthetase family.

The enzyme catalyses 5-amino-1-(5-phospho-D-ribosyl)imidazole-4-carboxylate + L-aspartate + ATP = (2S)-2-[5-amino-1-(5-phospho-beta-D-ribosyl)imidazole-4-carboxamido]succinate + ADP + phosphate + 2 H(+). The protein operates within purine metabolism; IMP biosynthesis via de novo pathway; 5-amino-1-(5-phospho-D-ribosyl)imidazole-4-carboxamide from 5-amino-1-(5-phospho-D-ribosyl)imidazole-4-carboxylate: step 1/2. This chain is Phosphoribosylaminoimidazole-succinocarboxamide synthase, found in Clostridium perfringens (strain 13 / Type A).